A 1414-amino-acid polypeptide reads, in one-letter code: Calcium-transporting ATPase 2 (1414 aa).

Disordered stretches follow at residues 1 to 231 (MSRN…PSRL) and 265 to 294 (AVGTDEGNAENGAPRSSADMPGGNGPQWRA). Over 1–327 (MSRNNPPPVI…LLMWLAFKDK (327 aa)) the chain is Cytoplasmic. Composition is skewed to low complexity over residues 33–53 (PTPTLVIPGSPASESSHPESP) and 75–96 (SPTPSYSSALTPPSPTLTSSSS). Residues 179–189 (DGDRGEDDANK) are compositionally biased toward basic and acidic residues. Over residues 190 to 201 (KGKKDKKGKKGK) the composition is skewed to basic residues. Basic and acidic residues predominate over residues 202 to 229 (KDKEEPPSAHLDPDKDKTDPTPFREKPS). A helical transmembrane segment spans residues 328–348 (VLILLSVAAVVSLALGLYQDL). At 349–370 (GTPPKIIYNDECPDGCEEAQVD) the chain is on the vacuolar side. A helical membrane pass occupies residues 371 to 391 (WVEGVAIVVAIIIVVLVGSIN). The Cytoplasmic segment spans residues 392-541 (DWQKERQFKK…TPLQIKLNHL (150 aa)). Residues 542–562 (AELIAKLGGASGLLLFIALMI) form a helical membrane-spanning segment. The Vacuolar portion of the chain corresponds to 563-585 (RFFVQLKTNPDRSANDKAQSFIQ). A helical transmembrane segment spans residues 586-606 (ILIIAVTLVVVAVPEGLPLAV). The Ca(2+) site is built by valine 595 and glutamate 600. Residues 607 to 1040 (TLALAFATKR…GRCVNDSVKK (434 aa)) are Cytoplasmic-facing. Aspartate 642 serves as the catalytic 4-aspartylphosphate intermediate. 2 residues coordinate Mg(2+): aspartate 642 and threonine 644. ATP contacts are provided by residues threonine 644, glutamate 737, arginine 779, 909 to 911 (TGD), arginine 958, and lysine 964. Aspartate 983 contributes to the Mg(2+) binding site. Asparagine 986 is a binding site for ATP. Residues 1041–1061 (FLQFQISVNITAVFITFISAV) traverse the membrane as a helical segment. Asparagine 1049 serves as a coordination point for Ca(2+). Over 1062–1068 (ASSSEES) the chain is Vacuolar. A helical membrane pass occupies residues 1069–1089 (VLTAVQLLWVNLIMDTFAALA). Residues asparagine 1079 and aspartate 1083 each coordinate Ca(2+). Topologically, residues 1090 to 1118 (LATDPATESSLDRKPDRKNAPLITVEMFK) are cytoplasmic. The helical transmembrane segment at 1119–1139 (MIMVQAIYQIIVCLVLHFAGL) threads the bilayer. Topologically, residues 1140–1153 (KILGLEDNDQNNTE) are vacuolar. The helical transmembrane segment at 1154–1171 (LGALVFNCFVFCQIFNQL) threads the bilayer. Residues 1172–1191 (NCRRLDRKLNVLEGFWRNWY) are Cytoplasmic-facing. Residues 1192-1212 (FIIIFLIMVGGQILIVEVGGA) form a helical membrane-spanning segment. Residue glutamate 1208 participates in Ca(2+) binding. The Vacuolar portion of the chain corresponds to 1213–1223 (AFQVTRLGGRD). A helical membrane pass occupies residues 1224–1244 (WGITLVIGALSLPIGALVRLT). Residues 1245–1414 (PTGPFARLLV…GLSSGDANNV (170 aa)) are Cytoplasmic-facing. The interval 1376–1414 (PRTNPDDPLYAKFGLQPPESRGSSVSGAEGLSSGDANNV) is disordered.

It belongs to the cation transport ATPase (P-type) (TC 3.A.3) family.

The protein localises to the vacuole membrane. It catalyses the reaction Ca(2+)(in) + ATP + H2O = Ca(2+)(out) + ADP + phosphate + H(+). Its function is as follows. This magnesium-dependent enzyme catalyzes the hydrolysis of ATP coupled with the transport of calcium. Transports calcium to the vacuole and participates in the control of cytosolic free calcium. The protein is Calcium-transporting ATPase 2 of Cryptococcus neoformans var. grubii serotype A (strain H99 / ATCC 208821 / CBS 10515 / FGSC 9487) (Filobasidiella neoformans var. grubii).